A 29-amino-acid chain; its full sequence is Scolopendra 8011.73 Da toxin (29 aa).

As to expression, expressed by the venom gland.

The protein resides in the secreted. The chain is Scolopendra 8011.73 Da toxin from Scolopendra viridicornis nigra (Brazilian giant centipede).